We begin with the raw amino-acid sequence, 2138 residues long: DNA polymerase epsilon catalytic subunit B (2138 aa).

A Nuclear localization signal 1 motif is present at residues 1224-1231 (EKRKWKMT). The Zn(2+) site is built by Cys-2015, Cys-2018, Cys-2040, and Cys-2045. A CysA-type zinc finger spans residues 2015–2045 (CSNCGAYRDLDFCRDSALLTEKEWSCADPQC). [4Fe-4S] cluster contacts are provided by Cys-2076, Cys-2079, Cys-2091, and Cys-2093. The CysB motif motif lies at 2076 to 2093 (CNRCNQVKAAHLTEQCEC). A Nuclear localization signal 2 motif is present at residues 2107–2114 (HKRIEIFL).

The protein belongs to the DNA polymerase type-B family. As to quaternary structure, heterotetramer. [4Fe-4S] cluster is required as a cofactor. Mostly expressed at low levels in inflorescence (floral meristem and flowers until anthesis), and, to a lower extent, in seeds.

The protein resides in the nucleus. The enzyme catalyses DNA(n) + a 2'-deoxyribonucleoside 5'-triphosphate = DNA(n+1) + diphosphate. Its function is as follows. DNA polymerase II, which participates in chromosomal DNA replication. Involved in the determination of cell fate during plant embryogenesis. Contributes to the flowering time repression. This is DNA polymerase epsilon catalytic subunit B (POL2B) from Arabidopsis thaliana (Mouse-ear cress).